A 120-amino-acid chain; its full sequence is Large ribosomal subunit protein uL18 (120 aa).

It belongs to the universal ribosomal protein uL18 family. As to quaternary structure, part of the 50S ribosomal subunit; part of the 5S rRNA/L5/L18/L25 subcomplex. Contacts the 5S and 23S rRNAs.

This is one of the proteins that bind and probably mediate the attachment of the 5S RNA into the large ribosomal subunit, where it forms part of the central protuberance. This Rhizobium johnstonii (strain DSM 114642 / LMG 32736 / 3841) (Rhizobium leguminosarum bv. viciae) protein is Large ribosomal subunit protein uL18.